The following is a 332-amino-acid chain: Autoinducer 2 import system permease protein LsrD (332 aa).

10 consecutive transmembrane segments (helical) span residues 7 to 27 (YSWE…FGLI), 45 to 65 (ICIG…GMDI), 70 to 90 (TIGL…PLPL), 91 to 111 (AIII…GLII), 118 to 138 (LVIT…LSGM), 162 to 182 (FLGI…FWLL), 216 to 236 (VYAM…SYFG), 240 to 260 (SDLG…GGAN), 261 to 281 (IYGG…VGFL), and 288 to 308 (AGVP…VVVV).

This sequence belongs to the binding-protein-dependent transport system permease family. AraH/RbsC subfamily. The complex is composed of two ATP-binding proteins (LsrA), two transmembrane proteins (LsrC and LsrD) and a solute-binding protein (LsrB).

The protein localises to the cell inner membrane. In terms of biological role, part of the ABC transporter complex LsrABCD involved in autoinducer 2 (AI-2) import. Probably responsible for the translocation of the substrate across the membrane. The polypeptide is Autoinducer 2 import system permease protein LsrD (lsrD) (Salmonella paratyphi B (strain ATCC BAA-1250 / SPB7)).